The primary structure comprises 335 residues: Methyltransferase pgmE (335 aa).

The protein belongs to the methyltransferase superfamily.

Its pathway is pigment biosynthesis. The protein operates within secondary metabolite biosynthesis. Methyltransferase; part of the gene cluster that mediates the biosynthesis of pleosporalin A, ascomycone A, as well as a third cryptic naphthoquinone derived pigment, all responsible for the coloration of conidia. Essential for the production of pleosporalin A, but not the 2 other final products. The pathway begins with the biosynthesis of the cyclized heptaketide 3-acetonyl-1,6,8-trihydroxy-2-naphthaldehyde by the NR-PKS pgmA. The C-6 hydroxyl group is further methylated by the O-methyltransferase pgmB to yield fusarubinaldehyde which is in turn oxidized by the cytochrome P450 monooxygenase pgmC at C-9. The C-1 hydroxyl group is then methylated spontaneously. Although pgmE, pgmD and pgmH are essential for the production of pleosporalin A, it is not the case for the 2 other final products and it remains difficult to assign a specific function to each enzyme. PgmF and pgmG seem not to be involved in pigment biosynthesis although they were regulated by the cluster-specific transcription factor pgmR. This Aspergillus terreus protein is Methyltransferase pgmE.